The sequence spans 498 residues: ATP synthase subunit beta, chloroplastic (498 aa).

Gly-172–Thr-179 contacts ATP.

It belongs to the ATPase alpha/beta chains family. As to quaternary structure, F-type ATPases have 2 components, CF(1) - the catalytic core - and CF(0) - the membrane proton channel. CF(1) has five subunits: alpha(3), beta(3), gamma(1), delta(1), epsilon(1). CF(0) has four main subunits: a(1), b(1), b'(1) and c(9-12).

It is found in the plastid. The protein localises to the chloroplast thylakoid membrane. The enzyme catalyses ATP + H2O + 4 H(+)(in) = ADP + phosphate + 5 H(+)(out). Functionally, produces ATP from ADP in the presence of a proton gradient across the membrane. The catalytic sites are hosted primarily by the beta subunits. The polypeptide is ATP synthase subunit beta, chloroplastic (Gossypium barbadense (Sea Island cotton)).